The chain runs to 445 residues: MSVPIVETSLHYFVIYCSKLGQKEGTEHEKILFFYPPTINIGEQTNSVGISEAYVLFTKQFSPGQPCEFIHTKKSTLALLHPEEDIWMVLSVYNPTGITGKDNKREYIEDEVDDIILMKTIQQIYQTWQTFNGSIMSLASKTSYDNVRKRLESFVKPYIQQIQFDQLDLFTSLDGIKFLPLNKNVYLTIFGYINSVDLHFQSTLSSFRFGLVLYKDNLILSSLEQNETRILYNYLINMVKVGPDINSSNSMIVKNNSNNIPIWQTKGVRTGFMIQKDSLPMVWLGGKPQAMIVYEQKDTFLLFLIDPSDLPQLPFEDLSASLVQNFEFVNLTLEQHYAKKANFDEQYKYIYFNQMNLAIRSPIKPKGPELNKETMKLLNEIHADFEGGLSSEIIVKTQQDRWIVAKKIDFREFYIMFDNKNSSILEINEEVKNATTKFFKFLFTD.

This sequence belongs to the CCZ1 family.

This is Vacuolar fusion protein CCZ1 homolog from Dictyostelium discoideum (Social amoeba).